The sequence spans 576 residues: Peptidoglycan D,D-transpeptidase FtsI (576 aa).

The helical transmembrane segment at 22–42 (ITILLSLIIITIILVLSRITF) threads the bilayer. Catalysis depends on serine 308, which acts as the Acyl-ester intermediate.

This sequence belongs to the transpeptidase family. FtsI subfamily.

Its subcellular location is the cell inner membrane. It catalyses the reaction Preferential cleavage: (Ac)2-L-Lys-D-Ala-|-D-Ala. Also transpeptidation of peptidyl-alanyl moieties that are N-acyl substituents of D-alanine.. Its pathway is cell wall biogenesis; peptidoglycan biosynthesis. Catalyzes cross-linking of the peptidoglycan cell wall at the division septum. The chain is Peptidoglycan D,D-transpeptidase FtsI from Buchnera aphidicola subsp. Baizongia pistaciae (strain Bp).